The primary structure comprises 212 residues: Methylthioribulose-1-phosphate dehydratase (212 aa).

2 residues coordinate Zn(2+): His103 and His105.

It belongs to the aldolase class II family. MtnB subfamily. Requires Zn(2+) as cofactor.

It catalyses the reaction 5-(methylsulfanyl)-D-ribulose 1-phosphate = 5-methylsulfanyl-2,3-dioxopentyl phosphate + H2O. The protein operates within amino-acid biosynthesis; L-methionine biosynthesis via salvage pathway; L-methionine from S-methyl-5-thio-alpha-D-ribose 1-phosphate: step 2/6. Functionally, catalyzes the dehydration of methylthioribulose-1-phosphate (MTRu-1-P) into 2,3-diketo-5-methylthiopentyl-1-phosphate (DK-MTP-1-P). In Sorangium cellulosum (strain So ce56) (Polyangium cellulosum (strain So ce56)), this protein is Methylthioribulose-1-phosphate dehydratase.